The chain runs to 178 residues: Ribosome maturation factor RimM (178 aa).

The region spanning 101–178 is the PRC barrel domain; it reads ADEYYWYQLV…VMRVEWDADF (78 aa).

The protein belongs to the RimM family. In terms of assembly, binds ribosomal protein uS19.

The protein resides in the cytoplasm. Its function is as follows. An accessory protein needed during the final step in the assembly of 30S ribosomal subunit, possibly for assembly of the head region. Essential for efficient processing of 16S rRNA. May be needed both before and after RbfA during the maturation of 16S rRNA. It has affinity for free ribosomal 30S subunits but not for 70S ribosomes. The sequence is that of Ribosome maturation factor RimM from Pseudomonas putida (strain ATCC 47054 / DSM 6125 / CFBP 8728 / NCIMB 11950 / KT2440).